The sequence spans 272 residues: 4-diphosphocytidyl-2-C-methyl-D-erythritol kinase (272 aa).

Lys14 is a catalytic residue. ATP is bound at residue Pro92–Ser102. Asp132 is an active-site residue.

It belongs to the GHMP kinase family. IspE subfamily.

The enzyme catalyses 4-CDP-2-C-methyl-D-erythritol + ATP = 4-CDP-2-C-methyl-D-erythritol 2-phosphate + ADP + H(+). Its pathway is isoprenoid biosynthesis; isopentenyl diphosphate biosynthesis via DXP pathway; isopentenyl diphosphate from 1-deoxy-D-xylulose 5-phosphate: step 3/6. In terms of biological role, catalyzes the phosphorylation of the position 2 hydroxy group of 4-diphosphocytidyl-2C-methyl-D-erythritol. This is 4-diphosphocytidyl-2-C-methyl-D-erythritol kinase from Fervidobacterium nodosum (strain ATCC 35602 / DSM 5306 / Rt17-B1).